Here is a 225-residue protein sequence, read N- to C-terminus: Large ribosomal subunit protein bL25 (225 aa).

The segment at 206–225 is disordered; sequence EDSKNKITKDNETNKDKSNL.

This sequence belongs to the bacterial ribosomal protein bL25 family. CTC subfamily. In terms of assembly, part of the 50S ribosomal subunit; part of the 5S rRNA/L5/L18/L25 subcomplex. Contacts the 5S rRNA. Binds to the 5S rRNA independently of L5 and L18.

In terms of biological role, this is one of the proteins that binds to the 5S RNA in the ribosome where it forms part of the central protuberance. The protein is Large ribosomal subunit protein bL25 of Vesicomyosocius okutanii subsp. Calyptogena okutanii (strain HA).